Consider the following 214-residue polypeptide: Pyridoxine/pyridoxamine 5'-phosphate oxidase (214 aa).

Substrate contacts are provided by residues 7 to 10 and lysine 65; that span reads REEY. FMN is bound by residues 60-65, 75-76, arginine 81, lysine 82, and glutamine 104; these read RTVLLK and FT. Substrate-binding residues include tyrosine 122, arginine 126, and serine 130. FMN-binding positions include 139-140 and tryptophan 184; that span reads QS. 190 to 192 provides a ligand contact to substrate; sequence RLH. Arginine 194 serves as a coordination point for FMN.

This sequence belongs to the pyridoxamine 5'-phosphate oxidase family. Homodimer. It depends on FMN as a cofactor.

It carries out the reaction pyridoxamine 5'-phosphate + O2 + H2O = pyridoxal 5'-phosphate + H2O2 + NH4(+). The enzyme catalyses pyridoxine 5'-phosphate + O2 = pyridoxal 5'-phosphate + H2O2. Its pathway is cofactor metabolism; pyridoxal 5'-phosphate salvage; pyridoxal 5'-phosphate from pyridoxamine 5'-phosphate: step 1/1. It participates in cofactor metabolism; pyridoxal 5'-phosphate salvage; pyridoxal 5'-phosphate from pyridoxine 5'-phosphate: step 1/1. Functionally, catalyzes the oxidation of either pyridoxine 5'-phosphate (PNP) or pyridoxamine 5'-phosphate (PMP) into pyridoxal 5'-phosphate (PLP). This Crocosphaera subtropica (strain ATCC 51142 / BH68) (Cyanothece sp. (strain ATCC 51142)) protein is Pyridoxine/pyridoxamine 5'-phosphate oxidase.